Here is a 351-residue protein sequence, read N- to C-terminus: Methylthioribose-1-phosphate isomerase (351 aa).

Substrate-binding positions include 51–53, arginine 94, and glutamine 199; that span reads RGA. The active-site Proton donor is aspartate 240. 250 to 251 contacts substrate; that stretch reads NK.

This sequence belongs to the EIF-2B alpha/beta/delta subunits family. MtnA subfamily. As to quaternary structure, homodimer.

It catalyses the reaction 5-(methylsulfanyl)-alpha-D-ribose 1-phosphate = 5-(methylsulfanyl)-D-ribulose 1-phosphate. It participates in amino-acid biosynthesis; L-methionine biosynthesis via salvage pathway; L-methionine from S-methyl-5-thio-alpha-D-ribose 1-phosphate: step 1/6. Catalyzes the interconversion of methylthioribose-1-phosphate (MTR-1-P) into methylthioribulose-1-phosphate (MTRu-1-P). The protein is Methylthioribose-1-phosphate isomerase of Bacillus cereus (strain ZK / E33L).